Here is a 362-residue protein sequence, read N- to C-terminus: Phosphoglycolate phosphatase 1B, chloroplastic (362 aa).

The N-terminal 54 residues, methionine 1–methionine 54, are a transit peptide targeting the chloroplast. An N-acetylthreonine modification is found at threonine 55. The active-site Nucleophile is glutamate 80. Serine 356 is modified (phosphoserine).

This sequence belongs to the HAD-like hydrolase superfamily. CbbY/CbbZ/Gph/YieH family.

It localises to the plastid. The protein resides in the chloroplast. The enzyme catalyses 2-phosphoglycolate + H2O = glycolate + phosphate. Functionally, photorespiratory enzyme that dephosphorylates the 2-phosphoglycolate produced by the RuBisCO oxygenation reaction. This Arabidopsis thaliana (Mouse-ear cress) protein is Phosphoglycolate phosphatase 1B, chloroplastic (PGLP1B).